The following is a 318-amino-acid chain: Acetyl-coenzyme A carboxylase carboxyl transferase subunit alpha (318 aa).

The CoA carboxyltransferase C-terminal domain maps to 38-292 (KLEKRLAKLE…NKTITKSLHA (255 aa)).

It belongs to the AccA family. In terms of assembly, acetyl-CoA carboxylase is a heterohexamer composed of biotin carboxyl carrier protein (AccB), biotin carboxylase (AccC) and two subunits each of ACCase subunit alpha (AccA) and ACCase subunit beta (AccD).

Its subcellular location is the cytoplasm. The enzyme catalyses N(6)-carboxybiotinyl-L-lysyl-[protein] + acetyl-CoA = N(6)-biotinyl-L-lysyl-[protein] + malonyl-CoA. It participates in lipid metabolism; malonyl-CoA biosynthesis; malonyl-CoA from acetyl-CoA: step 1/1. Functionally, component of the acetyl coenzyme A carboxylase (ACC) complex. First, biotin carboxylase catalyzes the carboxylation of biotin on its carrier protein (BCCP) and then the CO(2) group is transferred by the carboxyltransferase to acetyl-CoA to form malonyl-CoA. In Listeria monocytogenes serotype 4b (strain CLIP80459), this protein is Acetyl-coenzyme A carboxylase carboxyl transferase subunit alpha.